The sequence spans 639 residues: UvrABC system protein C (639 aa).

A GIY-YIG domain is found at 31-109; the sequence is EQAGVYRMYD…IKKYQPKYNI (79 aa). In terms of domain architecture, UVR spans 218 to 253; sequence SAVIEQLVARMELASNELHFELAAKYRDQIVTLRKV.

This sequence belongs to the UvrC family. As to quaternary structure, interacts with UvrB in an incision complex.

It localises to the cytoplasm. Its function is as follows. The UvrABC repair system catalyzes the recognition and processing of DNA lesions. UvrC both incises the 5' and 3' sides of the lesion. The N-terminal half is responsible for the 3' incision and the C-terminal half is responsible for the 5' incision. The sequence is that of UvrABC system protein C from Colwellia psychrerythraea (strain 34H / ATCC BAA-681) (Vibrio psychroerythus).